Reading from the N-terminus, the 248-residue chain is MPPVLILLTLLLPLRAGAEEIIGGNEISPHSRPYMAYYEFLKVGGKKMFCGGFLVRDKFVLTAAHCKGSSMTVTLGAHNIKAKEETQQIIPVAKAIPHPDYNPDDRSNDIMLLKLVRNAKRTRAVRPLNLPRRNAHVKPGDECYVAGWGKVTPDGEFPKTLHEVKLTVQKDQVCESQFQSSYNRANEICVGDSKIKGASFEEDSGGPLVCKRAAAGIVSYGQTDGSAPQVFTRVLSFVSWIKKTMKHS.

The signal sequence occupies residues 1–18 (MPPVLILLTLLLPLRAGA). Residues 19–20 (EE) constitute a propeptide that is removed on maturation. A Peptidase S1 domain is found at 21–246 (IIGGNEISPH…FVSWIKKTMK (226 aa)). Cys50 and Cys66 are oxidised to a cystine. Residues His65 and Asp109 each act as charge relay system in the active site. Disulfide bonds link Cys143–Cys210 and Cys174–Cys189. The active-site Charge relay system is Ser204.

This sequence belongs to the peptidase S1 family. Granzyme subfamily.

Its subcellular location is the cytolytic granule. Its function is as follows. This enzyme is probably necessary for target cell lysis in cell-mediated immune responses. This is Granzyme C (Gzmc) from Mus musculus (Mouse).